The chain runs to 387 residues: Phosphoglycerate kinase (387 aa).

Substrate-binding positions include 21 to 23, R36, 59 to 62, R113, and R146; these read DLN and HLGR. Residues K197, E314, and 340–343 contribute to the ATP site; that span reads GGDT.

It belongs to the phosphoglycerate kinase family. Monomer.

Its subcellular location is the cytoplasm. The catalysed reaction is (2R)-3-phosphoglycerate + ATP = (2R)-3-phospho-glyceroyl phosphate + ADP. The protein operates within carbohydrate degradation; glycolysis; pyruvate from D-glyceraldehyde 3-phosphate: step 2/5. In Sodalis glossinidius (strain morsitans), this protein is Phosphoglycerate kinase.